Here is a 268-residue protein sequence, read N- to C-terminus: uncharacterized protein (268 aa).

This is an uncharacterized protein from Acanthamoeba polyphaga mimivirus (APMV).